We begin with the raw amino-acid sequence, 209 residues long: Thiamine-phosphate synthase (209 aa).

4-amino-2-methyl-5-(diphosphooxymethyl)pyrimidine is bound by residues 32 to 36 (QLRMK) and aspartate 64. Mg(2+) contacts are provided by aspartate 65 and aspartate 84. Threonine 103 is a binding site for 4-amino-2-methyl-5-(diphosphooxymethyl)pyrimidine. 129–131 (TTT) is a 2-[(2R,5Z)-2-carboxy-4-methylthiazol-5(2H)-ylidene]ethyl phosphate binding site. Lysine 132 lines the 4-amino-2-methyl-5-(diphosphooxymethyl)pyrimidine pocket. Residue glycine 165 coordinates 2-[(2R,5Z)-2-carboxy-4-methylthiazol-5(2H)-ylidene]ethyl phosphate.

It belongs to the thiamine-phosphate synthase family. It depends on Mg(2+) as a cofactor.

It catalyses the reaction 2-[(2R,5Z)-2-carboxy-4-methylthiazol-5(2H)-ylidene]ethyl phosphate + 4-amino-2-methyl-5-(diphosphooxymethyl)pyrimidine + 2 H(+) = thiamine phosphate + CO2 + diphosphate. It carries out the reaction 2-(2-carboxy-4-methylthiazol-5-yl)ethyl phosphate + 4-amino-2-methyl-5-(diphosphooxymethyl)pyrimidine + 2 H(+) = thiamine phosphate + CO2 + diphosphate. The enzyme catalyses 4-methyl-5-(2-phosphooxyethyl)-thiazole + 4-amino-2-methyl-5-(diphosphooxymethyl)pyrimidine + H(+) = thiamine phosphate + diphosphate. It participates in cofactor biosynthesis; thiamine diphosphate biosynthesis; thiamine phosphate from 4-amino-2-methyl-5-diphosphomethylpyrimidine and 4-methyl-5-(2-phosphoethyl)-thiazole: step 1/1. Functionally, condenses 4-methyl-5-(beta-hydroxyethyl)thiazole monophosphate (THZ-P) and 2-methyl-4-amino-5-hydroxymethyl pyrimidine pyrophosphate (HMP-PP) to form thiamine monophosphate (TMP). The polypeptide is Thiamine-phosphate synthase (Bacteroides thetaiotaomicron (strain ATCC 29148 / DSM 2079 / JCM 5827 / CCUG 10774 / NCTC 10582 / VPI-5482 / E50)).